The primary structure comprises 199 residues: MKILQINASARSAGANSTRLADTVTARLLARNPNAVVELRDLASHPHPVLDEPALGALFTPADQRTAEQSARVALDDALIAQVQSVDAIVLGVPMYNFGVPVQLKTWIDAIARAGVTFHYTEKGPEGLLKGKKVYVALARGGLYRDTPADSQVPYLKSVLGFLGMTDVEFIYAEGLAMGAESASKAFAEAEAQIEELIA.

Residues serine 9 and 95-98 (MYNF) contribute to the FMN site.

It belongs to the azoreductase type 1 family. Homodimer. It depends on FMN as a cofactor.

It catalyses the reaction 2 a quinone + NADH + H(+) = 2 a 1,4-benzosemiquinone + NAD(+). It carries out the reaction N,N-dimethyl-1,4-phenylenediamine + anthranilate + 2 NAD(+) = 2-(4-dimethylaminophenyl)diazenylbenzoate + 2 NADH + 2 H(+). Quinone reductase that provides resistance to thiol-specific stress caused by electrophilic quinones. Functionally, also exhibits azoreductase activity. Catalyzes the reductive cleavage of the azo bond in aromatic azo compounds to the corresponding amines. The polypeptide is FMN-dependent NADH:quinone oxidoreductase (Dechloromonas aromatica (strain RCB)).